An 875-amino-acid polypeptide reads, in one-letter code: Ectonucleotide pyrophosphatase/phosphodiesterase family member 3 (875 aa).

Over 1-11 (MDSRLALATEE) the chain is Cytoplasmic. A helical; Signal-anchor for type II membrane protein membrane pass occupies residues 12 to 30 (PIKKDSLKRYKILCAVLLA). Over 31–875 (LLVIVSLGLG…TYLPTFETII (845 aa)) the chain is Extracellular. SMB domains are found at residues 51-94 (HIGS…VKST) and 95-139 (QIWT…GEVP). Cystine bridges form between Cys55–Cys72, Cys59–Cys90, Cys70–Cys83, Cys76–Cys82, Cys99–Cys116, Cys104–Cys134, Cys114–Cys127, Cys120–Cys126, Cys145–Cys191, and Cys153–Cys365. Residues 79–81 (RGD) carry the Cell attachment site motif. The interval 161–545 (PVILFSMDGF…HGSLNHLLKA (385 aa)) is phosphodiesterase. Asp168 provides a ligand contact to Zn(2+). Residue Lys205 participates in ATP binding. Zn(2+) is bound at residue Thr206. Catalysis depends on Thr206, which acts as the Nucleophile. Asn227 is a binding site for ATP. Residue Asn237 is glycosylated (N-linked (GlcNAc...) asparagine). ATP is bound at residue Asp276. Asn280 and Asn289 each carry an N-linked (GlcNAc...) asparagine glycan. Tyr290 serves as a coordination point for ATP. Zn(2+) contacts are provided by Asp326, His330, Asp373, and His374. 6 disulfides stabilise this stretch: Cys381/Cys478, Cys429/Cys818, Cys562/Cys623, Cys575/Cys679, Cys577/Cys664, and Cys787/Cys797. His483 lines the Zn(2+) pocket. N-linked (GlcNAc...) asparagine glycosylation is found at Asn533, Asn574, Asn594, and Asn702. The tract at residues 582–875 (TSGQEEQVNQ…TYLPTFETII (294 aa)) is nuclease. The Ca(2+) site is built by Asp752, Asn754, Asp756, His758, and Asp760. N-linked (GlcNAc...) asparagine glycosylation is present at Asn789.

Belongs to the nucleotide pyrophosphatase/phosphodiesterase family. As to quaternary structure, monomer and homodimer. Zn(2+) serves as cofactor. The N-terminal is blocked. In terms of processing, N-glycosylated. N-glycosylation is necessary for normal transport to the cell membrane, but is not the apical targeting signal. As to expression, detected in intestinal epithelium and liver (at protein level).

The protein resides in the cell membrane. It is found in the apical cell membrane. Its subcellular location is the secreted. It catalyses the reaction Hydrolytically removes 5'-nucleotides successively from the 3'-hydroxy termini of 3'-hydroxy-terminated oligonucleotides.. The catalysed reaction is a ribonucleoside 5'-triphosphate + H2O = a ribonucleoside 5'-phosphate + diphosphate + H(+). The enzyme catalyses ATP + H2O = AMP + diphosphate + H(+). It carries out the reaction CTP + H2O = CMP + diphosphate + H(+). It catalyses the reaction GTP + H2O = GMP + diphosphate + H(+). The catalysed reaction is UTP + H2O = UMP + diphosphate + H(+). The enzyme catalyses UDP-N-acetyl-alpha-D-glucosamine + H2O = N-acetyl-alpha-D-glucosamine 1-phosphate + UMP + 2 H(+). It carries out the reaction P(1),P(3)-bis(5'-adenosyl) triphosphate + H2O = AMP + ADP + 2 H(+). It catalyses the reaction P(1),P(4)-bis(5'-adenosyl) tetraphosphate + H2O = AMP + ATP + 2 H(+). The catalysed reaction is P(1),P(5)-bis(5'-adenosyl) pentaphosphate + H2O = adenosine 5'-tetraphosphate + AMP + 2 H(+). The enzyme catalyses P(1),P(4)-bis(5'-guanosyl) tetraphosphate + H2O = GMP + GTP + 2 H(+). In terms of biological role, hydrolase that metabolizes extracellular nucleotides, including ATP, GTP, UTP and CTP. Limits mast cells and basophils response during inflammation and during the chronic phases of allergic responses by eliminating extracellular ATP, a signaling molecule activating these cells in an autocrine manner. Metabolizes extracellular ATP in the lumen of the small intestine, and thereby prevents ATP-induced apoptosis of intestinal plasmacytoid dendritic cells. Has a broad specificity and can also hydrolyze UDP-GlcNAc into UMP and GlcNAc-1-phosphate and potentially several other intracellular nucleotide sugars, including UDP-GalNAc, CMP-NeuAc, GDP-Fuc, and UDP-GlcA. Thereby, could modulate glycan biosynthesis and protein glycosylation. Can hydrolyze extracellular dinucleoside polyphosphates, including the vasoactive adenosine polyphosphates as well. In addition, displays an alkaline phosphodiesterase activity in vitro. The chain is Ectonucleotide pyrophosphatase/phosphodiesterase family member 3 from Rattus norvegicus (Rat).